The chain runs to 162 residues: Phosphopantetheine adenylyltransferase (162 aa).

Substrate is bound at residue S11. Residues 11-12 and H19 each bind ATP; that span reads SF. Substrate contacts are provided by K43, V76, and R90. Residues 91-93, E101, and 126-132 contribute to the ATP site; these read GLR and LKFVSSS.

This sequence belongs to the bacterial CoaD family. Homohexamer. The cofactor is Mg(2+).

Its subcellular location is the cytoplasm. It catalyses the reaction (R)-4'-phosphopantetheine + ATP + H(+) = 3'-dephospho-CoA + diphosphate. It participates in cofactor biosynthesis; coenzyme A biosynthesis; CoA from (R)-pantothenate: step 4/5. In terms of biological role, reversibly transfers an adenylyl group from ATP to 4'-phosphopantetheine, yielding dephospho-CoA (dPCoA) and pyrophosphate. The chain is Phosphopantetheine adenylyltransferase from Streptococcus suis (strain 05ZYH33).